Reading from the N-terminus, the 259-residue chain is Sphinganine C4-monooxygenase 2 (259 aa).

Helical transmembrane passes span 10 to 30 (FLGTFVPILVYWVYSGMYICL), 54 to 74 (AVVKGVLLQQTLQAIISVILF), and 91 to 111 (ILLLARQFIIAMLVIDTWQYF). The 137-residue stretch at 98 to 234 (FIIAMLVIDT…FVMWDRILGT (137 aa)) folds into the Fatty acid hydroxylase domain. The short motif at 113–117 (HRYMH) is the Histidine box-1 element. Positions 127 to 131 (HSQHH) match the Histidine box-2 motif. The Histidine box-3 signature appears at 206–212 (YHDVHHQ).

This sequence belongs to the sterol desaturase family. Fe cation is required as a cofactor. Ubiquitous, with higher levels in flowers and roots.

The protein resides in the endoplasmic reticulum membrane. It catalyses the reaction a dihydroceramide + 2 Fe(II)-[cytochrome b5] + O2 + 2 H(+) = a phytoceramide + 2 Fe(III)-[cytochrome b5] + H2O. It functions in the pathway membrane lipid metabolism; sphingolipid biosynthesis. Its function is as follows. Involved in sphingolipid trihydroxy long-chain base (4-hydroxysphinganine) biosynthesis. Can use C18- and C20-sphinganine as substrates to produce C18- and C20-phytosphinganines (D-ribo-2-amino-1,3,4-trihydroxyoctadecane and -eicosane). This chain is Sphinganine C4-monooxygenase 2 (SBH2), found in Arabidopsis thaliana (Mouse-ear cress).